A 627-amino-acid polypeptide reads, in one-letter code: (-)-alpha-pinene synthase 2, chloroplastic (627 aa).

The transit peptide at methionine 1–leucine 36 directs the protein to the chloroplast. Positions 378, 382, and 530 each coordinate Mg(2+). The DDXXD motif motif lies at aspartate 378–aspartate 382.

This sequence belongs to the terpene synthase family. Tpsd subfamily. Mg(2+) is required as a cofactor. It depends on Mn(2+) as a cofactor.

It localises to the plastid. The protein resides in the chloroplast. It carries out the reaction (2E)-geranyl diphosphate = (1S,5S)-alpha-pinene + diphosphate. The enzyme catalyses (2E)-geranyl diphosphate = (1S,5S)-beta-pinene + diphosphate. The protein operates within terpene metabolism; oleoresin biosynthesis. In terms of biological role, involved in defensive oleoresin formation in conifers in response to insect attack or other injury. Involved in monoterpene (C10) olefins biosynthesis. A mixture of alpha- and beta-pinene (35:10) is produced by this enzyme. The sequence is that of (-)-alpha-pinene synthase 2, chloroplastic from Picea sitchensis (Sitka spruce).